A 500-amino-acid polypeptide reads, in one-letter code: NAD(P)H-quinone oxidoreductase subunit 2, chloroplastic (500 aa).

13 helical membrane-spanning segments follow: residues Ile-15–Leu-35, Trp-42–Trp-62, Phe-79–Ile-99, Leu-109–Ala-129, Leu-132–Tyr-152, Leu-167–Leu-187, Leu-201–Val-221, Val-247–Ile-267, Trp-278–Ile-298, Met-306–Thr-326, Leu-334–Phe-354, Ala-377–Phe-397, and Ile-400–Leu-420.

Belongs to the complex I subunit 2 family. In terms of assembly, NDH is composed of at least 16 different subunits, 5 of which are encoded in the nucleus.

The protein localises to the plastid. It localises to the chloroplast thylakoid membrane. The catalysed reaction is a plastoquinone + NADH + (n+1) H(+)(in) = a plastoquinol + NAD(+) + n H(+)(out). It carries out the reaction a plastoquinone + NADPH + (n+1) H(+)(in) = a plastoquinol + NADP(+) + n H(+)(out). In terms of biological role, NDH shuttles electrons from NAD(P)H:plastoquinone, via FMN and iron-sulfur (Fe-S) centers, to quinones in the photosynthetic chain and possibly in a chloroplast respiratory chain. The immediate electron acceptor for the enzyme in this species is believed to be plastoquinone. Couples the redox reaction to proton translocation, and thus conserves the redox energy in a proton gradient. The chain is NAD(P)H-quinone oxidoreductase subunit 2, chloroplastic from Chaetosphaeridium globosum (Charophycean green alga).